Here is a 245-residue protein sequence, read N- to C-terminus: Probable transcriptional regulatory protein CPR_1922 (245 aa).

This sequence belongs to the TACO1 family.

Its subcellular location is the cytoplasm. In Clostridium perfringens (strain SM101 / Type A), this protein is Probable transcriptional regulatory protein CPR_1922.